We begin with the raw amino-acid sequence, 156 residues long: Ubiquitin-like protein 4A (156 aa).

Residues 1–76 (MILTVKPLQG…LNLVIRPVGE (76 aa)) form the Ubiquitin-like domain.

As to quaternary structure, component of the bag6/bat3 complex.

The protein localises to the cytoplasm. It is found in the cytosol. It localises to the nucleus. In terms of biological role, as part of a cytosolic protein quality control complex, the bag6/bat3 complex, maintains misfolded and hydrophobic patches-containing proteins in a soluble state and participates in their proper delivery to the endoplasmic reticulum or alternatively can promote their sorting to the proteasome where they undergo degradation. The bag6/bat3 complex is involved in the post-translational delivery of tail-anchored/type II transmembrane proteins to the endoplasmic reticulum membrane. Similarly, the bag6/bat3 complex also functions as a sorting platform for proteins of the secretory pathway that are mislocalized to the cytosol either delivering them to the proteasome for degradation or to the endoplasmic reticulum. The bag6/bat3 complex also plays a role in the endoplasmic reticulum-associated degradation (ERAD), a quality control mechanism that eliminates unwanted proteins of the endoplasmic reticulum through their retrotranslocation to the cytosol and their targeting to the proteasome. It maintains these retrotranslocated proteins in an unfolded yet soluble state condition in the cytosol to ensure their proper delivery to the proteasome. This chain is Ubiquitin-like protein 4A (ubl4a), found in Anoplopoma fimbria (Sablefish).